We begin with the raw amino-acid sequence, 361 residues long: MLTINIEKQLGQLQLKVNTQLPLRGVTAVFGRSGAGKTSLVNLLGGLTTPDKGEISLGDTLLFKHKTVNLPPEKRRIGYVFQEARLFPHYSVKGNLTYGMRHQSPALFDRIVQLLGLEKHLRSYPSTLSGGEKQRVAIGRALLTSPQMLLMDEPLASLDLPRKRELLPYLQTLAQELKLPIIYVSHSLDEILQLADHMLVLHQGHIIAQGPLTDVWNSEQMRPWVPLQELSSLICARIADRHPDYPMTRLVMDDGNQLWVSGQLPQTHKQVKVRIQANHVSVCTAEPKRSSIRNVLKGKIKELYPSDNDEQVQLKIALGNDELWANITLWACDELQLVAGKEIYAQIKGVTMTQMDIAQSH.

The ABC transporter domain occupies 1–228 (MLTINIEKQL…EQMRPWVPLQ (228 aa)). Residue 31–38 (GRSGAGKT) participates in ATP binding. The 68-residue stretch at 289-356 (RSSIRNVLKG…IKGVTMTQMD (68 aa)) folds into the Mop domain.

It belongs to the ABC transporter superfamily. Molybdate importer (TC 3.A.1.8) family. In terms of assembly, the complex is composed of two ATP-binding proteins (ModC), two transmembrane proteins (ModB) and a solute-binding protein (ModA).

It is found in the cell inner membrane. It catalyses the reaction molybdate(out) + ATP + H2O = molybdate(in) + ADP + phosphate + H(+). Functionally, part of the ABC transporter complex ModABC involved in molybdenum import. Responsible for energy coupling to the transport system. This Shewanella oneidensis (strain ATCC 700550 / JCM 31522 / CIP 106686 / LMG 19005 / NCIMB 14063 / MR-1) protein is Molybdenum import ATP-binding protein ModC.